The following is a 346-amino-acid chain: NADH-ubiquinone oxidoreductase chain 2 (346 aa).

Helical transmembrane passes span 1 to 21 (MNPH…TITI), 25 to 45 (HWIM…PLIS), 60 to 80 (FLVQ…NAWA), 96 to 116 (MLLT…FWFP), 124 to 144 (LTTA…ILLM), 149 to 169 (LNPT…GWMG), 178 to 198 (ILAF…IYNP), 200 to 220 (LTLL…LSLN), 242 to 262 (AALM…GFMP), 274 to 294 (EMTT…FFYL), and 325 to 345 (IAIL…ILAA).

It belongs to the complex I subunit 2 family.

The protein resides in the mitochondrion inner membrane. The enzyme catalyses a ubiquinone + NADH + 5 H(+)(in) = a ubiquinol + NAD(+) + 4 H(+)(out). In terms of biological role, core subunit of the mitochondrial membrane respiratory chain NADH dehydrogenase (Complex I) that is believed to belong to the minimal assembly required for catalysis. Complex I functions in the transfer of electrons from NADH to the respiratory chain. The immediate electron acceptor for the enzyme is believed to be ubiquinone. The sequence is that of NADH-ubiquinone oxidoreductase chain 2 (MT-ND2) from Struthio camelus (Common ostrich).